The chain runs to 997 residues: Synaptonemal complex protein 1 (997 aa).

Positions 102–112 (PMSRLYSKLYK) match the Mediates head to head self-assembly of N-terminal ends motif. The short motif at 118–121 (KKWK) is the Nuclear localization signal element. Coiled-coil stretches lie at residues 121–176 (KVSI…LIKE) and 212–696 (YVDL…KKIS). The tract at residues 207-363 (ETRQVYVDLN…YQLTEEKEAQ (157 aa)) is interaction with SYCE3. Residues 698 to 792 (EKLLGEVEKA…VSLKKQLEVE (95 aa)) form a required for pH-induced assembly of C-terminal ends into antiparallel tetramers region. Positions 701 to 704 (LGEV) match the Nuclear localization signal motif. Residues 768–806 (KVALETELSNIRNELVSLKKQLEVEKEEKEKLKMEQENT) are a coiled coil. Positions 805–997 (NTAILTDKKD…RLKEAEKLFT (193 aa)) are DNA-binding. Ser824 bears the Phosphoserine mark. The disordered stretch occupies residues 828-863 (TSWKFDSKTTPSQNISRLSSSMDSGKSKDNRDSLRA). Residues 835-851 (KTTPSQNISRLSSSMDS) show a composition bias toward polar residues. Positions 852–861 (GKSKDNRDSL) are enriched in basic and acidic residues. A Nuclear localization signal motif is present at residues 902–905 (KKRK). Phosphothreonine is present on Thr940.

In terms of assembly, structural component of synaptonemal complexes. Homotetramer that consists of an N-terminal four-helical bundle that bifurcates into two elongated C-terminal dimeric coiled coils. This tetrameric building block potentially self-assembles into a supramolecular zipper-like lattice to mediate meiotic chromosome synapsis. Self-assembly is likely initiated by local proton density at chromosome axis, which is predicted to trigger antiparallel back to back assembly of adjacent C-terminal ends into tetrameric structures that anchor to chromosomal DNA. Then the N-terminal ends are predicted to undergo cooperative antiparallel head to head assembly at the midline of synaptonemal complexes central element to form a zipper-like lattice between properly aligned homologous chromosomes. The nascent synapsis generated by SYCP1 is stabilized through interaction with central element proteins SYCE1 and SYCE2. Interacts (via tetrameric core) with SYCE3; the interaction remodels SYCP1 homotetramers to 2:1 heterotrimers with SYCE3. SYCP1/SYCE3 heterotrimers form lattice assemblies as part of the mature synaptonemal complex via both lateral and head-to-head interactions. Forms a complex with EWSR1, PRDM9, SYCP3 and REC8; complex formation is dependent of phosphorylated form of REC8 and requires PRDM9 bound to hotspot DNA; EWSR1 joins PRDM9 with the chromosomal axis through REC8. Interacts with SPO16. As to expression, testis.

Its subcellular location is the nucleus. It is found in the chromosome. The protein resides in the centromere. Functionally, major component of the transverse filaments of synaptonemal complexes, formed between homologous chromosomes during meiotic prophase. Required for normal assembly of the central element of the synaptonemal complexes. Required for normal centromere pairing during meiosis. Required for normal meiotic chromosome synapsis during oocyte and spermatocyte development and for normal male and female fertility. The chain is Synaptonemal complex protein 1 from Rattus norvegicus (Rat).